The chain runs to 143 residues: 18 kDa heat shock protein (143 aa).

One can recognise a sHSP domain in the interval 23–135 (TWSRPTAMPM…KRRRVKVGQG (113 aa)).

The protein belongs to the small heat shock protein (HSP20) family.

This chain is 18 kDa heat shock protein (hsp18), found in Streptomyces albus G.